The following is a 607-amino-acid chain: Methylmalonate-semialdehyde dehydrogenase [acylating], mitochondrial (607 aa).

The interval 1 to 69 (MVRVKQKNLE…KLRSSSSTTT (69 aa)) is disordered. Residues 1–98 (MVRVKQKNLE…QFLALRSSWL (98 aa)) constitute a mitochondrion transit peptide. Positions 9 to 30 (LESYRSNGTYPPTWRNPTTSFA) are enriched in polar residues. The span at 42-51 (LKSKTKRRRL) shows a compositional bias: basic residues. NAD(+) contacts are provided by F259, K283, E286, K287, and S336. The Nucleophile role is filled by C391. E491 is an NAD(+) binding site.

This sequence belongs to the aldehyde dehydrogenase family.

It is found in the mitochondrion. It carries out the reaction 2-methyl-3-oxopropanoate + NAD(+) + CoA + H2O = propanoyl-CoA + hydrogencarbonate + NADH + H(+). The polypeptide is Methylmalonate-semialdehyde dehydrogenase [acylating], mitochondrial (ALDH6B2) (Arabidopsis thaliana (Mouse-ear cress)).